We begin with the raw amino-acid sequence, 332 residues long: tRNA U34 carboxymethyltransferase (332 aa).

Residues K91, W105, K110, G130, 152–154 (DPS), 181–182 (IE), M196, Y200, and R315 contribute to the carboxy-S-adenosyl-L-methionine site.

Belongs to the class I-like SAM-binding methyltransferase superfamily. CmoB family. As to quaternary structure, homotetramer.

The enzyme catalyses carboxy-S-adenosyl-L-methionine + 5-hydroxyuridine(34) in tRNA = 5-carboxymethoxyuridine(34) in tRNA + S-adenosyl-L-homocysteine + H(+). Catalyzes carboxymethyl transfer from carboxy-S-adenosyl-L-methionine (Cx-SAM) to 5-hydroxyuridine (ho5U) to form 5-carboxymethoxyuridine (cmo5U) at position 34 in tRNAs. This chain is tRNA U34 carboxymethyltransferase, found in Shewanella sp. (strain W3-18-1).